Reading from the N-terminus, the 548-residue chain is uncharacterized protein (548 aa).

2 positions are modified to phosphoserine: Ser-19 and Ser-25. Phosphothreonine is present on Thr-47.

This is an uncharacterized protein from Schizosaccharomyces pombe (strain 972 / ATCC 24843) (Fission yeast).